Consider the following 348-residue polypeptide: MNDPNSCVDNATVCSGASCVVPESNFNNILSVVLSTVLTILLALVMFSMGCNVEIKKFLGHIKRPWGICVGFLCQFGIMPLTGFILSVAFDILPLQAVVVLIIGCCPGGTASNILAYWVDGDMDLSVSMTTCSTLLALGMMPLCLLIYTKMWVDSGSIVIPYDNIGTSLVSLVVPVSIGMFVNHKWPQKAKIILKIGSIAGAILIVLIAVVGGILYQSAWIIAPKLWIIGTIFPVAGYSLGFLLARIAGLPWYRCRTVAFETGMQNTQLCSTIVQLSFTPEELNVVFTFPLIYSIFQLAFAAIFLGFYVAYKKCHGKNKAEIPESKENGTEPESSFYKANGGFQPDEK.

The Extracellular portion of the chain corresponds to 1–28 (MNDPNSCVDNATVCSGASCVVPESNFNN). Residue asparagine 10 is glycosylated (N-linked (GlcNAc...) asparagine). Residues 29–49 (ILSVVLSTVLTILLALVMFSM) traverse the membrane as a helical segment. Over 50-82 (GCNVEIKKFLGHIKRPWGICVGFLCQFGIMPLT) the chain is Cytoplasmic. Residues 83 to 103 (GFILSVAFDILPLQAVVVLII) traverse the membrane as a helical segment. The Extracellular segment spans residues 104-126 (GCCPGGTASNILAYWVDGDMDLS). The helical transmembrane segment at 127-147 (VSMTTCSTLLALGMMPLCLLI) threads the bilayer. Over 148–157 (YTKMWVDSGS) the chain is Cytoplasmic. A helical membrane pass occupies residues 158–178 (IVIPYDNIGTSLVSLVVPVSI). The Extracellular segment spans residues 179 to 195 (GMFVNHKWPQKAKIILK). A helical membrane pass occupies residues 196-216 (IGSIAGAILIVLIAVVGGILY). The Cytoplasmic portion of the chain corresponds to 217–224 (QSAWIIAP). The chain crosses the membrane as a helical span at residues 225–245 (KLWIIGTIFPVAGYSLGFLLA). Residues 246-284 (RIAGLPWYRCRTVAFETGMQNTQLCSTIVQLSFTPEELN) lie on the Extracellular side of the membrane. A helical membrane pass occupies residues 285-305 (VVFTFPLIYSIFQLAFAAIFL). Topologically, residues 306–348 (GFYVAYKKCHGKNKAEIPESKENGTEPESSFYKANGGFQPDEK) are cytoplasmic. The segment covering 320–329 (AEIPESKENG) has biased composition (basic and acidic residues). A disordered region spans residues 320–348 (AEIPESKENGTEPESSFYKANGGFQPDEK). Serine 335 carries the phosphoserine modification.

Belongs to the bile acid:sodium symporter (BASS) (TC 2.A.28) family. In terms of assembly, monomer and homodimer. As to expression, mainly expressed in ileum and kidney, lower expression in cecum.

Its subcellular location is the membrane. The catalysed reaction is taurocholate(out) + 2 Na(+)(out) = taurocholate(in) + 2 Na(+)(in). The enzyme catalyses cholate(out) + 2 Na(+)(out) = cholate(in) + 2 Na(+)(in). It carries out the reaction taurochenodeoxycholate(out) + 2 Na(+)(out) = taurochenodeoxycholate(in) + 2 Na(+)(in). It catalyses the reaction tauroursodeoxycholate(out) + 2 Na(+)(out) = tauroursodeoxycholate(in) + 2 Na(+)(in). The catalysed reaction is glycocholate(out) + 2 Na(+)(out) = glycocholate(in) + 2 Na(+)(in). The enzyme catalyses tauronorcholate(out) + 2 Na(+)(out) = tauronorcholate(in) + 2 Na(+)(in). It carries out the reaction tauroallocholate(out) + 2 Na(+)(out) = tauroallocholate(in) + 2 Na(+)(in). It catalyses the reaction taurodeoxycholate(out) + 2 Na(+)(out) = taurodeoxycholate(in) + 2 Na(+)(in). The catalysed reaction is tauro-beta-muricholate(out) + 2 Na(+)(out) = tauro-beta-muricholate(in) + 2 Na(+)(in). Functionally, plays a critical role in the sodium-dependent reabsorption of bile acids from the lumen of the small intestine. Transports various bile acids, unconjugated or conjugated, such as cholate and taurocholate. Also responsible for bile acid transport in the renal proximal tubules, a salvage mechanism that helps conserve bile acids. Works collaboratively with the Na(+)-taurocholate cotransporting polypeptide (NTCP), the organic solute transporter (OST), and the bile salt export pump (BSEP), to ensure efficacious biological recycling of bile acids during enterohepatic circulation. This Homo sapiens (Human) protein is Ileal sodium/bile acid cotransporter (SLC10A2).